The chain runs to 186 residues: Putative inactive recombination-promoting nuclease-like protein YjiQ (186 aa).

This sequence belongs to the Rpn/YhgA-like nuclease family.

This pseudogene is the C-terminal fragment of low activity DNA endonuclease RpnD which probably yields 3'-hydroxyl ends. The intact protein can be seen in this entry (AC B7NGZ6). Expression of the repaired protein increases the frequency of recA-independent recombination, but also decreases viability probably via DNA damage; in a RecA strain expression has no effect on viability but does induce the SOS repair response. May play a role in horizontal gene transfer. The chain is Putative inactive recombination-promoting nuclease-like protein YjiQ (yjiQ) from Escherichia coli (strain K12).